The sequence spans 134 residues: Ribosome-binding factor A (134 aa).

It belongs to the RbfA family. As to quaternary structure, monomer. Binds 30S ribosomal subunits, but not 50S ribosomal subunits or 70S ribosomes.

It localises to the cytoplasm. Its function is as follows. One of several proteins that assist in the late maturation steps of the functional core of the 30S ribosomal subunit. Associates with free 30S ribosomal subunits (but not with 30S subunits that are part of 70S ribosomes or polysomes). Required for efficient processing of 16S rRNA. May interact with the 5'-terminal helix region of 16S rRNA. The protein is Ribosome-binding factor A of Tolumonas auensis (strain DSM 9187 / NBRC 110442 / TA 4).